A 125-amino-acid chain; its full sequence is Small ribosomal subunit protein uS12m (125 aa).

Disordered regions lie at residues 1 to 23 (MPTLNQLIRHGREEKRRTDRTRA) and 104 to 125 (LMGIPGRRSGRSKYGAEKPKSI). Residues 10–23 (HGREEKRRTDRTRA) show a composition bias toward basic and acidic residues.

Belongs to the universal ribosomal protein uS12 family.

The protein resides in the mitochondrion. Functionally, protein S12 is involved in the translation initiation step. This chain is Small ribosomal subunit protein uS12m (RPS12), found in Raphanus sativus (Radish).